Consider the following 215-residue polypeptide: N-(5'-phosphoribosyl)anthranilate isomerase (215 aa).

This sequence belongs to the TrpF family.

The catalysed reaction is N-(5-phospho-beta-D-ribosyl)anthranilate = 1-(2-carboxyphenylamino)-1-deoxy-D-ribulose 5-phosphate. The protein operates within amino-acid biosynthesis; L-tryptophan biosynthesis; L-tryptophan from chorismate: step 3/5. This chain is N-(5'-phosphoribosyl)anthranilate isomerase, found in Paracoccus denitrificans (strain Pd 1222).